The sequence spans 434 residues: MKHLTPREIVAELDRHIVGQNAAKRAVAIALRNRWRRKQAPENLRGEITPKNILMIGPTGVGKTEVSRRLARLANAPFLKVEATKFTEVGYVGRDVEQIVRDLVEAAVGMIREQKRAGVDKAARDKAEERLLDALVGAEAQSSTREVFRRKLRAGELDDKEVDLDFADTNNPMQMLDLPGQGGSMSMINLGDMLGKAMGGRTRRVRTTVREAAKPLVTEEADKLVDEEQIVREAIMAVEEDGIVFLDEIDKIAARKDRGGADVSREGVQRDLLPLIEGTTVSTKRGAVKTDHILFIASGAFHVAKPSDLLPELQGRLPIRVELEPLTRDDLRRILVEPQASLIRQYEALMAAENVTLTFEDGAIDRIADMAEAVNKSIENIGARRLQTILERLLDDISFDAPDKGGETFTITASYVDEKVGSLAGNADLSKFIL.

Residues Val18, 60 to 65 (GVGKTE), Asp247, Glu312, and Arg384 each bind ATP.

Belongs to the ClpX chaperone family. HslU subfamily. As to quaternary structure, a double ring-shaped homohexamer of HslV is capped on each side by a ring-shaped HslU homohexamer. The assembly of the HslU/HslV complex is dependent on binding of ATP.

It localises to the cytoplasm. Functionally, ATPase subunit of a proteasome-like degradation complex; this subunit has chaperone activity. The binding of ATP and its subsequent hydrolysis by HslU are essential for unfolding of protein substrates subsequently hydrolyzed by HslV. HslU recognizes the N-terminal part of its protein substrates and unfolds these before they are guided to HslV for hydrolysis. This is ATP-dependent protease ATPase subunit HslU from Hyphomonas neptunium (strain ATCC 15444).